The following is a 456-amino-acid chain: tRNA modification GTPase MnmE (456 aa).

Positions 24, 81, and 120 each coordinate (6S)-5-formyl-5,6,7,8-tetrahydrofolate. The TrmE-type G domain occupies 216 to 379; sequence GMTVVIAGRP…LRDHLKACMG (164 aa). Asparagine 226 serves as a coordination point for K(+). Residues 226 to 231, 245 to 251, 270 to 273, 335 to 338, and 359 to 361 each bind GTP; these read NAGKSS, TDIAGTT, DTAG, NKAD, and SAR. Serine 230 contacts Mg(2+). Positions 245, 247, and 250 each coordinate K(+). Threonine 251 provides a ligand contact to Mg(2+). Lysine 456 serves as a coordination point for (6S)-5-formyl-5,6,7,8-tetrahydrofolate.

This sequence belongs to the TRAFAC class TrmE-Era-EngA-EngB-Septin-like GTPase superfamily. TrmE GTPase family. Homodimer. Heterotetramer of two MnmE and two MnmG subunits. The cofactor is K(+).

Its subcellular location is the cytoplasm. Functionally, exhibits a very high intrinsic GTPase hydrolysis rate. Involved in the addition of a carboxymethylaminomethyl (cmnm) group at the wobble position (U34) of certain tRNAs, forming tRNA-cmnm(5)s(2)U34. This chain is tRNA modification GTPase MnmE, found in Pseudomonas entomophila (strain L48).